The sequence spans 763 residues: Protein CHROMATIN REMODELING 19 (763 aa).

Disordered regions lie at residues 1–43 (MKRD…TPSI) and 114–149 (EDEEASDDDDDEAESSASEDEFGGGGGGSGGRRGED). The span at 23-34 (VLKRPRTPKKTR) shows a compositional bias: basic residues. The segment covering 114–135 (EDEEASDDDDDEAESSASEDEF) has biased composition (acidic residues). The Helicase ATP-binding domain maps to 226–404 (LLYKKGIEGA…WSLLEFMLPD (179 aa)). 239–246 (DEMGLGKT) is a binding site for ATP. The short motif at 353–356 (DEAH) is the DEAH box element. Residues 462–482 (RKQEDAYKEAIEEYRAASQAR) adopt a coiled-coil conformation. A Nuclear localization signal motif is present at residues 520–527 (IRRIYSDE). A Helicase C-terminal domain is found at 592–742 (TLAELLPSMK…AAVLESGVHV (151 aa)).

It belongs to the SNF2/RAD54 helicase family. As to quaternary structure, interacts with SUVR2 and itself.

The protein resides in the nucleus. Functionally, DNA helicase that possesses intrinsic ATP-dependent nucleosome-remodeling activity and is both required for DNA repair and heterochromatin organization. Promotes DNA end resection of double-strand breaks (DSBs) following DNA damage: probably acts by weakening histone DNA interactions in nucleosomes flanking DSBs. Probable chromatin remodeling factor. Probable helicase-like transcription factor involved in transcriptional gene silencing. Associates with SUVR2 and contributes to transcriptional gene silencing at RNA-directed DNA methylation (RdDM) target loci but also at RdDM-independent target loci. May be involved in nucleosome positioning to form ordered nucleosome arrays on chromatin. This is Protein CHROMATIN REMODELING 19 from Arabidopsis thaliana (Mouse-ear cress).